The following is a 261-amino-acid chain: Pyridoxine 5'-phosphate synthase (261 aa).

Asn-6 lines the 3-amino-2-oxopropyl phosphate pocket. 8-9 contributes to the 1-deoxy-D-xylulose 5-phosphate binding site; the sequence is DH. Arg-17 provides a ligand contact to 3-amino-2-oxopropyl phosphate. The Proton acceptor role is filled by His-42. Positions 44 and 49 each coordinate 1-deoxy-D-xylulose 5-phosphate. The Proton acceptor role is filled by Glu-69. Thr-99 contacts 1-deoxy-D-xylulose 5-phosphate. Catalysis depends on His-213, which acts as the Proton donor. Residues Gly-214 and 235-236 contribute to the 3-amino-2-oxopropyl phosphate site; that span reads GQ.

It belongs to the PNP synthase family. As to quaternary structure, homooctamer; tetramer of dimers.

The protein localises to the cytoplasm. It carries out the reaction 3-amino-2-oxopropyl phosphate + 1-deoxy-D-xylulose 5-phosphate = pyridoxine 5'-phosphate + phosphate + 2 H2O + H(+). The protein operates within cofactor biosynthesis; pyridoxine 5'-phosphate biosynthesis; pyridoxine 5'-phosphate from D-erythrose 4-phosphate: step 5/5. Catalyzes the complicated ring closure reaction between the two acyclic compounds 1-deoxy-D-xylulose-5-phosphate (DXP) and 3-amino-2-oxopropyl phosphate (1-amino-acetone-3-phosphate or AAP) to form pyridoxine 5'-phosphate (PNP) and inorganic phosphate. This chain is Pyridoxine 5'-phosphate synthase, found in Aliarcobacter butzleri (strain RM4018) (Arcobacter butzleri).